A 363-amino-acid chain; its full sequence is Fructose-1,6-bisphosphatase 1 (363 aa).

Val-2 carries the post-translational modification N-acetylvaline. Residues 18 to 22 (VLEEG) and 28 to 32 (TGEMT) contribute to the AMP site. Residues Asp-69 and Glu-98 each coordinate Mg(2+). 113–114 (KY) contacts AMP. Positions 119, 121, and 122 each coordinate Mg(2+). Position 122–125 (122–125 (DGSS)) interacts with substrate. Arg-141 provides a ligand contact to AMP. An N6-succinyllysine modification is found at Lys-151. Substrate-binding positions include 213 to 216 (NEGY), 244 to 249 (RYVGSM), Tyr-265, and 275 to 277 (KLR). Phosphotyrosine is present on residues Tyr-216, Tyr-245, and Tyr-265. Glu-281 contributes to the Mg(2+) binding site. Ser-339 and Ser-353 each carry phosphoserine.

This sequence belongs to the FBPase class 1 family. In terms of assembly, homotetramer. Mg(2+) is required as a cofactor.

The enzyme catalyses beta-D-fructose 1,6-bisphosphate + H2O = beta-D-fructose 6-phosphate + phosphate. The protein operates within carbohydrate biosynthesis; gluconeogenesis. With respect to regulation, subject to complex allosteric regulation. The enzyme can assume an active R-state, or an inactive T-state. Intermediate conformations may exist. AMP acts as an allosteric inhibitor. AMP binding affects the turnover of bound substrate and not the affinity for substrate. Fructose 2,6-bisphosphate acts as a competitive inhibitor. Fructose 2,6-bisphosphate and AMP have synergistic effects. Functionally, catalyzes the hydrolysis of fructose 1,6-bisphosphate to fructose 6-phosphate in the presence of divalent cations, acting as a rate-limiting enzyme in gluconeogenesis. Plays a role in regulating glucose sensing and insulin secretion of pancreatic beta-cells. Appears to modulate glycerol gluconeogenesis in liver. Important regulator of appetite and adiposity; increased expression of the protein in liver after nutrient excess increases circulating satiety hormones and reduces appetite-stimulating neuropeptides and thus seems to provide a feedback mechanism to limit weight gain. The protein is Fructose-1,6-bisphosphatase 1 (Fbp1) of Rattus norvegicus (Rat).